Here is a 419-residue protein sequence, read N- to C-terminus: MDYKAPRRYYSHGVVARQQDFATDIVTRRRPYVPYDRPNKFSRSLVWTSKEYKSPEGNNMPRTNDVSPKPPVLGLARKNAACGPMRSSSLRKWVCKYWKDGKCKRGEQCQFLHSWSCFPGLAMVASLEGHNKELKGIALPEGSDKLFSVSIDGTLRVWDCNSGQCVHSINLDAEAGSLISEGPWVFLGLPNAIKAFNVQTSQDLHLQAAGVVGQVNAMTIANGMLFAGTSSGSILVWKATTDSESDPFKYLTSLEGHSGEVTCFAVGGQMLYSGSVDKTIKMWDLNTLQCIMTLKQHTGTVTSLLCWDKCLISSSLDGTIKVWAYSENGILKVVQTRRQEQSSVHALSGMHDAEAKPIIFCSYQNGTVGIFDLPSFQERGRMFSTHTIATLTIGPQGLLFSGDESGNLRVWTLAAGNKV.

The C3H1-type zinc finger occupies 89-116 (SLRKWVCKYWKDGKCKRGEQCQFLHSWS). WD repeat units lie at residues 129–168 (GHNKELKGIALPEGSDKLFSVSIDGTLRVWDCNSGQCVHS), 210–247 (GVVGQVNAMTIANGMLFAGTSSGSILVWKATTDSESDP), 256–293 (GHSGEVTCFAVGGQMLYSGSVDKTIKMWDLNTLQCIMT), 296–335 (QHTGTVTSLLCWDKCLISSSLDGTIKVWAYSENGILKVVQ), and 383–419 (FSTHTIATLTIGPQGLLFSGDESGNLRVWTLAAGNKV).

This is Zinc finger CCCH domain-containing protein 62 (ZFWD4) from Arabidopsis thaliana (Mouse-ear cress).